The sequence spans 129 residues: uncharacterized protein (129 aa).

A helical membrane pass occupies residues 33–50; sequence MGGNVMWFIALLFALLIA.

The protein localises to the membrane. This is an uncharacterized protein from Saccharomyces cerevisiae (strain ATCC 204508 / S288c) (Baker's yeast).